Reading from the N-terminus, the 426-residue chain is COP9 signalosome complex subunit 6 (426 aa).

An MPN domain is found at 14 to 155; it reads VLLHPLVIMQ…AGTTRKLPLF (142 aa). A disordered region spans residues 320-426; it reads PVRFKSQHLG…NESDESSQAS (107 aa). Over residues 334–347 the composition is skewed to acidic residues; it reads ADDDDYFDDEDLEN.

Belongs to the peptidase M67A family. CSN6 subfamily. In terms of assembly, component of the CSN complex, probably composed of csn-1, csn-2, csn-3, csn-4, csn-5, csn-6 and csn-7. Within the complex it probably interacts directly with csn-2 and csn-4. Interacts with rbx-1.

The protein resides in the cytoplasm. The protein localises to the nucleus. In terms of biological role, component of the COP9 signalosome complex (CSN), a complex involved in various cellular and developmental processes. The CSN complex is an essential regulator of the ubiquitin (Ubl) conjugation pathway by mediating the deneddylation of the cullin subunits of the SCF-type E3 ligase complexes, leading to decrease the Ubl ligase activity of SCF. The CSN complex plays an essential role in embryogenesis and oogenesis and is required to regulate microtubule stability in the early embryo. Mediates mei-3/katanin targeting for degradation at the meiosis to mitosis transition via deneddylation of cul-3. This Caenorhabditis elegans protein is COP9 signalosome complex subunit 6 (csn-6).